The primary structure comprises 427 residues: MLDLKLIRQKPEWAKEKLAARAIKGEEIDELLALDTRRRQVTVQTEELKAKRNDVSGQIAVMKRNKENADDQIKAMREVGQKIAALDKELAQLNEKVTYILVRLPNFPADDVPMSLNEDDSREEYKWGNMPTFDFEPKHHWDIGEKLGILDFERAAKVAGSRFVYYKGAGARLERAVYNFFLDEHQKEGYEEIIPPYLVNNDSMFGTGQFPKFTDATYTITNDGEPLTLIPTAEVPLVNYYRNDIIDAEKLPVNFTALTPAFRSEAGSAGRDTRGLIRMHQFNKVEMVKFCKPEDSWKQLQNLIHDAEDLLQKLGLPYHVITLASNDASFTSAKTNDLEVWMPAQDRYREISSCSNCTDFQARRAQIRYRDDDGKLQFVHTLNGSGLAVGRTVASILENYQQADGSVKIPDVIVPYMQGQTAITKED.

An L-serine-binding site is contributed by 232-234 (TAE). Position 263-265 (263-265 (RSE)) interacts with ATP. Residue Glu286 participates in L-serine binding. 350-353 (EISS) contacts ATP. Residue Ser385 participates in L-serine binding.

This sequence belongs to the class-II aminoacyl-tRNA synthetase family. Type-1 seryl-tRNA synthetase subfamily. Homodimer. The tRNA molecule binds across the dimer.

The protein resides in the cytoplasm. It carries out the reaction tRNA(Ser) + L-serine + ATP = L-seryl-tRNA(Ser) + AMP + diphosphate + H(+). The enzyme catalyses tRNA(Sec) + L-serine + ATP = L-seryl-tRNA(Sec) + AMP + diphosphate + H(+). It functions in the pathway aminoacyl-tRNA biosynthesis; selenocysteinyl-tRNA(Sec) biosynthesis; L-seryl-tRNA(Sec) from L-serine and tRNA(Sec): step 1/1. In terms of biological role, catalyzes the attachment of serine to tRNA(Ser). Is also able to aminoacylate tRNA(Sec) with serine, to form the misacylated tRNA L-seryl-tRNA(Sec), which will be further converted into selenocysteinyl-tRNA(Sec). The chain is Serine--tRNA ligase from Lacticaseibacillus paracasei (strain ATCC 334 / BCRC 17002 / CCUG 31169 / CIP 107868 / KCTC 3260 / NRRL B-441) (Lactobacillus paracasei).